The chain runs to 206 residues: Pro-glucagon (206 aa).

Positions 1-22 (MKMKSIYFIAGLLLMIVQGSWQ) are cleaved as a signal peptide. Residues 27–57 (DTEEKSRSFKASQSEPLDESRQLNEVKRHSQ) are disordered. The segment covering 44 to 54 (DESRQLNEVKR) has biased composition (basic and acidic residues). The propeptide occupies 86 to 109 (NGQQGQEDKENDKFPDQLSSNAIS). Arginine 147 is modified (arginine amide). Propeptides lie at residues 151 to 163 (DFPE…EEMG) and 199 to 206 (RDLLGEYQ).

This sequence belongs to the glucagon family. In terms of processing, proglucagon is post-translationally processed in a tissue-specific manner in pancreatic A cells and intestinal L cells. In pancreatic A cells, the major bioactive hormone is glucagon cleaved by PCSK2/PC2. In the intestinal L cells PCSK1/PC1 liberates GLP-1 and GLP-2. GLP-1 is further N-terminally truncated by post-translational processing in the intestinal L cells resulting in GLP-1(7-37) GLP-1-(7-36)amide.

Its subcellular location is the secreted. Plays a key role in glucose metabolism and homeostasis. Regulates blood glucose by increasing gluconeogenesis and decreasing glycolysis. In terms of biological role, potent stimulator of glucose-dependent insulin release. Plays important roles on gastric motility and the suppression of plasma glucagon levels. May be involved in the suppression of satiety and stimulation of glucose disposal in peripheral tissues, independent of the actions of insulin. Has growth-promoting activities on intestinal epithelium. May also regulate the hypothalamic pituitary axis (HPA) via effects on LH, TSH, CRH, oxytocin, and vasopressin secretion. Increases islet mass through stimulation of islet neogenesis and pancreatic beta cell proliferation. Its function is as follows. Stimulates intestinal growth and up-regulates villus height in the small intestine, concomitant with increased crypt cell proliferation and decreased enterocyte apoptosis. The gastrointestinal tract, from the stomach to the colon is the principal target for GLP-2 action. Plays a key role in nutrient homeostasis, enhancing nutrient assimilation through enhanced gastrointestinal function, as well as increasing nutrient disposal. Stimulates intestinal glucose transport and decreases mucosal permeability. This Gallus gallus (Chicken) protein is Pro-glucagon (GCG).